A 235-amino-acid polypeptide reads, in one-letter code: tRNA (guanine-N(1)-)-methyltransferase (235 aa).

Residues glycine 112 and 132–137 (IGDYVI) contribute to the S-adenosyl-L-methionine site.

Belongs to the RNA methyltransferase TrmD family. As to quaternary structure, homodimer.

It localises to the cytoplasm. The catalysed reaction is guanosine(37) in tRNA + S-adenosyl-L-methionine = N(1)-methylguanosine(37) in tRNA + S-adenosyl-L-homocysteine + H(+). Functionally, specifically methylates guanosine-37 in various tRNAs. This Anaplasma marginale (strain St. Maries) protein is tRNA (guanine-N(1)-)-methyltransferase.